The chain runs to 495 residues: Putative myristoylated membrane protein 458R (495 aa).

Gly-2 is lipidated: N-myristoyl glycine; by host. N-linked (GlcNAc...) asparagine; by host glycans are attached at residues Asn-58, Asn-71, Asn-72, Asn-103, and Asn-111. The stretch at 150 to 182 forms a coiled coil; it reads HLKEIHKIITKEVENAKNNNKDVTKLIEQFSQA. Helical transmembrane passes span 194-214 and 216-236; these read ILSL…YVGG and IAFP…FNWT. N-linked (GlcNAc...) asparagine; by host glycans are attached at residues Asn-262, Asn-314, Asn-317, Asn-349, and Asn-457. Residues 469–489 form a helical membrane-spanning segment; that stretch reads LWLLCVAVILLFIGIIGMGLG.

Belongs to the IIV-6 118L/458R family.

The protein localises to the membrane. This chain is Putative myristoylated membrane protein 458R, found in Acheta domesticus (House cricket).